Consider the following 1087-residue polypeptide: 2'-5'-oligoadenylate synthase 3 (1087 aa).

At M1 the chain carries N-acetylmethionine. The tract at residues 6-343 (TPAAALDRFV…GDPVQSWKGP (338 aa)) is OAS domain 1. 2 interaction with dsRNA regions span residues 12 to 57 (DRFV…VLKT) and 186 to 200 (ELRRNFVNIRPAKLK). The linker stretch occupies residues 344 to 410 (GLPRAGCSGL…VPGMALDLSQ (67 aa)). T365 is modified (phosphothreonine). 2 OAS domain regions span residues 411–742 (IPTK…PWDV) and 750–1084 (TPAG…WPVK). S804 lines the ATP pocket. Mg(2+) contacts are provided by D816, D818, and D888. Residues R947, K950, and Q969 each contribute to the ATP site.

Belongs to the 2-5A synthase family. As to quaternary structure, monomer. Mg(2+) serves as cofactor. Present at high level in placenta trophoblast.

It localises to the cytoplasm. The protein resides in the nucleus. The enzyme catalyses 3 ATP = 5'-triphosphoadenylyl-(2'-&gt;5')-adenylyl-(2'-&gt;5')-adenosine + 2 diphosphate. Its activity is regulated as follows. Produced as a latent enzyme which is activated by dsRNA generated during the course of viral infection. Strongly activated by long dsRNAs at least 50 nucleotides in length. ssRNA does not activate the enzyme. Interferon-induced, dsRNA-activated antiviral enzyme which plays a critical role in cellular innate antiviral response. In addition, it may also play a role in other cellular processes such as apoptosis, cell growth, differentiation and gene regulation. Synthesizes preferentially dimers of 2'-5'-oligoadenylates (2-5A) from ATP which then bind to the inactive monomeric form of ribonuclease L (RNase L) leading to its dimerization and subsequent activation. Activation of RNase L leads to degradation of cellular as well as viral RNA, resulting in the inhibition of protein synthesis, thus terminating viral replication. Can mediate the antiviral effect via the classical RNase L-dependent pathway or an alternative antiviral pathway independent of RNase L. Displays antiviral activity against Chikungunya virus (CHIKV), Dengue virus, Sindbis virus (SINV) and Semliki forest virus (SFV). This is 2'-5'-oligoadenylate synthase 3 (OAS3) from Homo sapiens (Human).